We begin with the raw amino-acid sequence, 289 residues long: Diaminopimelate epimerase (289 aa).

Substrate-binding residues include Asn11 and Asn78. Cys87 (proton donor) is an active-site residue. Residues 88–89, Asn163, Asn199, and 217–218 contribute to the substrate site; these read GN and ER. Cys226 acts as the Proton acceptor in catalysis. 227–228 is a substrate binding site; sequence GT.

Belongs to the diaminopimelate epimerase family. In terms of assembly, homodimer.

It localises to the cytoplasm. It carries out the reaction (2S,6S)-2,6-diaminopimelate = meso-2,6-diaminopimelate. It participates in amino-acid biosynthesis; L-lysine biosynthesis via DAP pathway; DL-2,6-diaminopimelate from LL-2,6-diaminopimelate: step 1/1. Catalyzes the stereoinversion of LL-2,6-diaminopimelate (L,L-DAP) to meso-diaminopimelate (meso-DAP), a precursor of L-lysine and an essential component of the bacterial peptidoglycan. The chain is Diaminopimelate epimerase from Mycolicibacterium gilvum (strain PYR-GCK) (Mycobacterium gilvum (strain PYR-GCK)).